Consider the following 364-residue polypeptide: DNA polymerase IV (364 aa).

Residues 14-198 (IIHIDMDAFF…LPIEKFHGVG (185 aa)) form the UmuC domain. Mg(2+) is bound by residues aspartate 18 and aspartate 116. Glutamate 117 is an active-site residue.

It belongs to the DNA polymerase type-Y family. As to quaternary structure, monomer. It depends on Mg(2+) as a cofactor.

Its subcellular location is the cytoplasm. The enzyme catalyses DNA(n) + a 2'-deoxyribonucleoside 5'-triphosphate = DNA(n+1) + diphosphate. Its function is as follows. Poorly processive, error-prone DNA polymerase involved in untargeted mutagenesis. Copies undamaged DNA at stalled replication forks, which arise in vivo from mismatched or misaligned primer ends. These misaligned primers can be extended by PolIV. Exhibits no 3'-5' exonuclease (proofreading) activity. May be involved in translesional synthesis, in conjunction with the beta clamp from PolIII. This Streptococcus pyogenes serotype M18 (strain MGAS8232) protein is DNA polymerase IV.